The sequence spans 1342 residues: DNA-directed RNA polymerase subunit beta (1342 aa).

Belongs to the RNA polymerase beta chain family. In terms of assembly, the RNAP catalytic core consists of 2 alpha, 1 beta, 1 beta' and 1 omega subunit. When a sigma factor is associated with the core the holoenzyme is formed, which can initiate transcription.

It catalyses the reaction RNA(n) + a ribonucleoside 5'-triphosphate = RNA(n+1) + diphosphate. DNA-dependent RNA polymerase catalyzes the transcription of DNA into RNA using the four ribonucleoside triphosphates as substrates. The chain is DNA-directed RNA polymerase subunit beta from Citrobacter koseri (strain ATCC BAA-895 / CDC 4225-83 / SGSC4696).